The primary structure comprises 431 residues: MASDCSPTGCSSESSARASDCALASTCSVETTCLPSACATSSCQTPSFPSGARLPTGCLPPACFAGSCNIPCVVGNCAWCEDGVFNSNEKETMQFLNDRLASYLEKVRGLEELNAELECRIREQCEEDVPLVCPDYQCYFDTIEDLQQKILCTKAENCRLAVQLDNCKLAADDFRSKYESELSLRQLVETDISGLRGILGELTVCRSDLEAHVESLKDDLLCLKKSHEEEVNVLRGQLGDRLSVELDTAPTTDLNRVLDEMRCQYETVLANNRRDVEEWFAAQTEELNQQQLSSAEQLQGCQTEILELKRTANTLEIELQAQQSLTESLECTVAETEAQYSSELAQIQCLIDNVENQLAEIRCDLERQNQEYRVLLDTKARLECEINTYQGLLDSEDSRLPCNPCSATSMSNDTCEPCSAYVICTVENSCP.

The tract at residues 1 to 89 is head; it reads MASDCSPTGC…CEDGVFNSNE (89 aa). Positions 89–400 constitute an IF rod domain; it reads EKETMQFLND…GLLDSEDSRL (312 aa). The interval 90–124 is coil 1A; the sequence is KETMQFLNDRLASYLEKVRGLEELNAELECRIREQ. A linker 1 region spans residues 125–135; the sequence is CEEDVPLVCPD. The coil 1B stretch occupies residues 136-236; the sequence is YQCYFDTIED…HEEEVNVLRG (101 aa). The segment at 237–252 is linker 12; it reads QLGDRLSVELDTAPTT. The interval 253–396 is coil 2; it reads DLNRVLDEMR…NTYQGLLDSE (144 aa). A tail region spans residues 397 to 431; the sequence is DSRLPCNPCSATSMSNDTCEPCSAYVICTVENSCP.

This sequence belongs to the intermediate filament family. Heterotetramer of two type I and two type II keratins.

Its function is as follows. May play a role in late hair differentiation. The polypeptide is Keratin, type I cytoskeletal 40 (KRT40) (Bos taurus (Bovine)).